The sequence spans 244 residues: Lipoprotein-releasing system ATP-binding protein LolD (244 aa).

The 226-residue stretch at 19–244 (IRAEALAKTY…KLRELAPSAV (226 aa)) folds into the ABC transporter domain. An ATP-binding site is contributed by 55–62 (GASGAGKS).

Belongs to the ABC transporter superfamily. Lipoprotein translocase (TC 3.A.1.125) family. In terms of assembly, the complex is composed of two ATP-binding proteins (LolD) and two transmembrane proteins (LolC and LolE).

It is found in the cell inner membrane. Part of the ABC transporter complex LolCDE involved in the translocation of mature outer membrane-directed lipoproteins, from the inner membrane to the periplasmic chaperone, LolA. Responsible for the formation of the LolA-lipoprotein complex in an ATP-dependent manner. The polypeptide is Lipoprotein-releasing system ATP-binding protein LolD (Xanthomonas oryzae pv. oryzae (strain MAFF 311018)).